A 131-amino-acid polypeptide reads, in one-letter code: Large ribosomal subunit protein bL12c (131 aa).

The disordered stretch occupies residues 107–131 (QGVSKDDAEASKKQLEDAGAKVKIS). Positions 110–131 (SKDDAEASKKQLEDAGAKVKIS) are enriched in basic and acidic residues.

Belongs to the bacterial ribosomal protein bL12 family. In terms of assembly, homodimer. Part of the ribosomal stalk of the 50S ribosomal subunit. Forms a multimeric L10(L12)X complex, where L10 forms an elongated spine to which 2 to 4 L12 dimers bind in a sequential fashion. Binds GTP-bound translation factors.

The protein resides in the plastid. It localises to the chloroplast. Functionally, forms part of the ribosomal stalk which helps the ribosome interact with GTP-bound translation factors. Is thus essential for accurate translation. This is Large ribosomal subunit protein bL12c from Chlorella vulgaris (Green alga).